The chain runs to 90 residues: UPF0297 protein lmo1503 (90 aa).

Belongs to the UPF0297 family.

This chain is UPF0297 protein lmo1503, found in Listeria monocytogenes serovar 1/2a (strain ATCC BAA-679 / EGD-e).